A 212-amino-acid polypeptide reads, in one-letter code: Ribonuclease HII (212 aa).

An RNase H type-2 domain is found at 17–206; sequence RVIAGVDEAG…KSTKPQSLQT (190 aa). Positions 23, 24, and 115 each coordinate a divalent metal cation.

It belongs to the RNase HII family. Mn(2+) serves as cofactor. It depends on Mg(2+) as a cofactor.

Its subcellular location is the cytoplasm. It catalyses the reaction Endonucleolytic cleavage to 5'-phosphomonoester.. Its function is as follows. Endonuclease that specifically degrades the RNA of RNA-DNA hybrids. This chain is Ribonuclease HII, found in Syntrophus aciditrophicus (strain SB).